The following is a 284-amino-acid chain: Diaminopimelate epimerase (284 aa).

Substrate contacts are provided by N14 and N67. C76 acts as the Proton donor in catalysis. Residues 77 to 78 (GN), N166, N199, and 217 to 218 (ER) each bind substrate. C226 acts as the Proton acceptor in catalysis. 227–228 (GT) contacts substrate.

Belongs to the diaminopimelate epimerase family. As to quaternary structure, homodimer.

It is found in the cytoplasm. It carries out the reaction (2S,6S)-2,6-diaminopimelate = meso-2,6-diaminopimelate. It functions in the pathway amino-acid biosynthesis; L-lysine biosynthesis via DAP pathway; DL-2,6-diaminopimelate from LL-2,6-diaminopimelate: step 1/1. Its function is as follows. Catalyzes the stereoinversion of LL-2,6-diaminopimelate (L,L-DAP) to meso-diaminopimelate (meso-DAP), a precursor of L-lysine and an essential component of the bacterial peptidoglycan. The polypeptide is Diaminopimelate epimerase (Geobacillus sp. (strain WCH70)).